The following is a 126-amino-acid chain: Holo-[acyl-carrier-protein] synthase (126 aa).

Residues D9 and E58 each contribute to the Mg(2+) site.

Belongs to the P-Pant transferase superfamily. AcpS family. Requires Mg(2+) as cofactor.

The protein resides in the cytoplasm. The catalysed reaction is apo-[ACP] + CoA = holo-[ACP] + adenosine 3',5'-bisphosphate + H(+). In terms of biological role, transfers the 4'-phosphopantetheine moiety from coenzyme A to a Ser of acyl-carrier-protein. The chain is Holo-[acyl-carrier-protein] synthase from Photobacterium profundum (strain SS9).